Consider the following 312-residue polypeptide: MEKNTASEDAFALSEATARDYLVLLKPRVMSLVVFTGLVGLVLAPGHMNPVLAVISILCIAVGAGASGALNMWYDADIDAVMKRTRKRPIPAGIIAPNQVLAFGLTLSAFSVMTLGLMVNWLAAALLAFTIFFYAVIYTMWLKRSTPQNIVIGGAAGAFPPMIGWAAATGEITWDSLVLFMIIFLWTPPHFWALSLFTTNDYEAARIPMMPNVKGELSTRRQALFYAVLMAPVGVLPWVMGFAGMFYGVVSTLLGLAFVYYAWRLWAADSQPQMLAAARKLFRFSLLYLAGIFAVLLFEALTFKLLAAFGVF.

The next 9 helical transmembrane spans lie at 29 to 49 (VMSL…GHMN), 50 to 70 (PVLA…SGAL), 90 to 110 (IPAG…LSAF), 117 to 137 (LMVN…YAVI), 150 to 170 (IVIG…AATG), 177 to 197 (LVLF…LSLF), 223 to 243 (ALFY…MGFA), 246 to 266 (FYGV…WRLW), and 292 to 312 (IFAV…FGVF).

This sequence belongs to the UbiA prenyltransferase family. Protoheme IX farnesyltransferase subfamily.

It localises to the cell inner membrane. It catalyses the reaction heme b + (2E,6E)-farnesyl diphosphate + H2O = Fe(II)-heme o + diphosphate. It participates in porphyrin-containing compound metabolism; heme O biosynthesis; heme O from protoheme: step 1/1. Converts heme B (protoheme IX) to heme O by substitution of the vinyl group on carbon 2 of heme B porphyrin ring with a hydroxyethyl farnesyl side group. The sequence is that of Protoheme IX farnesyltransferase from Brucella melitensis biotype 1 (strain ATCC 23456 / CCUG 17765 / NCTC 10094 / 16M).